We begin with the raw amino-acid sequence, 38 residues long: CHH precursor-related peptide (38 aa).

The tract at residues Gly-18–Glu-38 is disordered.

In terms of tissue distribution, produced by the medulla terminalis X-organ in the eyestalks and transported to the sinus gland where it is stored and released.

The protein resides in the secreted. The sequence is that of CHH precursor-related peptide from Cancer pagurus (Rock crab).